Consider the following 379-residue polypeptide: Dihydroorotate dehydrogenase (quinone) (379 aa).

FMN is bound by residues 79-83 (AGCDK) and alanine 103. Substrate is bound at residue lysine 83. 128–131 (NRLG) lines the substrate pocket. FMN-binding residues include asparagine 160 and asparagine 193. Residue asparagine 193 coordinates substrate. The active-site Nucleophile is the serine 196. Residue asparagine 198 participates in substrate binding. Residues lysine 231 and threonine 259 each contribute to the FMN site. 260–261 (NT) is a substrate binding site. Residues glycine 289, glycine 318, and 339–340 (YT) each bind FMN.

It belongs to the dihydroorotate dehydrogenase family. Type 2 subfamily. In terms of assembly, monomer. It depends on FMN as a cofactor.

It localises to the cell membrane. It carries out the reaction (S)-dihydroorotate + a quinone = orotate + a quinol. The protein operates within pyrimidine metabolism; UMP biosynthesis via de novo pathway; orotate from (S)-dihydroorotate (quinone route): step 1/1. Catalyzes the conversion of dihydroorotate to orotate with quinone as electron acceptor. This is Dihydroorotate dehydrogenase (quinone) from Crocosphaera subtropica (strain ATCC 51142 / BH68) (Cyanothece sp. (strain ATCC 51142)).